Here is a 65-residue protein sequence, read N- to C-terminus: Small ribosomal subunit protein bS21 (65 aa).

The disordered stretch occupies residues 45-65 (GRLKRSRSRRRAQRANEERNS). A compositionally biased stretch (basic residues) spans 48-57 (KRSRSRRRAQ).

It belongs to the bacterial ribosomal protein bS21 family.

This is Small ribosomal subunit protein bS21 from Pelodictyon phaeoclathratiforme (strain DSM 5477 / BU-1).